The chain runs to 275 residues: Dermonecrotic toxin LamSicTox-alphaIV1ii (275 aa).

Residue His-5 is part of the active site. 2 residues coordinate Mg(2+): Glu-25 and Asp-27. Catalysis depends on His-41, which acts as the Nucleophile. Disulfide bonds link Cys-45–Cys-51 and Cys-47–Cys-192. Asp-85 provides a ligand contact to Mg(2+).

It belongs to the arthropod phospholipase D family. Class II subfamily. Mg(2+) is required as a cofactor. Expressed by the venom gland.

It localises to the secreted. The catalysed reaction is an N-(acyl)-sphingosylphosphocholine = an N-(acyl)-sphingosyl-1,3-cyclic phosphate + choline. The enzyme catalyses an N-(acyl)-sphingosylphosphoethanolamine = an N-(acyl)-sphingosyl-1,3-cyclic phosphate + ethanolamine. It carries out the reaction a 1-acyl-sn-glycero-3-phosphocholine = a 1-acyl-sn-glycero-2,3-cyclic phosphate + choline. It catalyses the reaction a 1-acyl-sn-glycero-3-phosphoethanolamine = a 1-acyl-sn-glycero-2,3-cyclic phosphate + ethanolamine. Dermonecrotic toxins cleave the phosphodiester linkage between the phosphate and headgroup of certain phospholipids (sphingolipid and lysolipid substrates), forming an alcohol (often choline) and a cyclic phosphate. This toxin acts on sphingomyelin (SM). It may also act on ceramide phosphoethanolamine (CPE), lysophosphatidylcholine (LPC) and lysophosphatidylethanolamine (LPE), but not on lysophosphatidylserine (LPS), and lysophosphatidylglycerol (LPG). It acts by transphosphatidylation, releasing exclusively cyclic phosphate products as second products. Induces dermonecrosis, hemolysis, increased vascular permeability, edema, inflammatory response, and platelet aggregation. This chain is Dermonecrotic toxin LamSicTox-alphaIV1ii, found in Loxosceles amazonica (Recluse spider).